Reading from the N-terminus, the 496-residue chain is Fibronectin type III and SPRY domain-containing protein 1 (496 aa).

Positions 4 to 99 form a coiled coil; it reads QREALRKIIT…ALESSEELLE (96 aa). The region spanning 105–162 is the COS domain; that stretch reads LQASDSEDFSQAAKEIKDGITMAPAFRLSLKAKVSDNMSHLMVDFAQERQMLQALKFL. The Fibronectin type-III domain occupies 164–268; the sequence is VPSAPTIDLA…EPVTLETPAF (105 aa). In terms of domain architecture, B30.2/SPRY spans 290-477; that stretch reads WDAMGGKVQD…VTTGLQVPSA (188 aa). The interval 301–336 is disordered; it reads KAREKEGKGRTASPVNSPARGTPSPKRMSSGRGGRD. Residues arginine 310 and arginine 320 each carry the omega-N-methylarginine modification.

In terms of assembly, oligomerization is required for binding to microtubules.

Its subcellular location is the cytoplasm. It is found in the cytoskeleton. It localises to the microtubule organizing center. The protein resides in the centrosome. The protein localises to the nucleus. Its subcellular location is the cleavage furrow. Functionally, may be involved in microtubule organization and stabilization. The sequence is that of Fibronectin type III and SPRY domain-containing protein 1 (Fsd1) from Mus musculus (Mouse).